A 258-amino-acid polypeptide reads, in one-letter code: Peroxisomal membrane protein 11B (258 aa).

Residue K43 is modified to N6-acetyllysine. An interaction with PEX19, PEX11G and FIS1 and peroxisome targeting region spans residues 210–258; that stretch reads VVRNACDLFIPLDKLGLWRCGPGIVGLCGLVSSILSILTLICPWLRLKP. A helical membrane pass occupies residues 232–254; that stretch reads GIVGLCGLVSSILSILTLICPWL.

The protein belongs to the peroxin-11 family. In terms of assembly, homodimer. Heterodimer with PEX11G. Interacts with PEX19. Interacts with FIS1.

It is found in the peroxisome membrane. Involved in peroxisomal proliferation. May regulate peroxisome division by recruiting the dynamin-related GTPase DNM1L to the peroxisomal membrane. Promotes membrane protrusion and elongation on the peroxisomal surface. The protein is Peroxisomal membrane protein 11B (PEX11B) of Bos taurus (Bovine).